Here is a 574-residue protein sequence, read N- to C-terminus: ATP-dependent lipid A-core flippase (574 aa).

The next 4 membrane-spanning stretches (helical) occupy residues 11–31 (LLSY…GFGI), 60–80 (WFPL…FMGG), 156–176 (YTNW…GVLV), and 244–264 (LNSP…VWLA). Residues 23–304 (LLVLVGFGIN…LTDVNEKLQR (282 aa)) enclose the ABC transmembrane type-1 domain. Residues 335-570 (VRFDHVTLEY…QGAYFQLHQR (236 aa)) enclose the ABC transporter domain. 368-375 (GRSGAGKT) serves as a coordination point for ATP.

The protein belongs to the ABC transporter superfamily. Lipid exporter (TC 3.A.1.106) family. As to quaternary structure, homodimer.

It localises to the cell inner membrane. It carries out the reaction ATP + H2O + lipid A-core oligosaccharideSide 1 = ADP + phosphate + lipid A-core oligosaccharideSide 2.. In terms of biological role, involved in lipopolysaccharide (LPS) biosynthesis. Translocates lipid A-core from the inner to the outer leaflet of the inner membrane. Transmembrane domains (TMD) form a pore in the inner membrane and the ATP-binding domain (NBD) is responsible for energy generation. This chain is ATP-dependent lipid A-core flippase, found in Acinetobacter baylyi (strain ATCC 33305 / BD413 / ADP1).